Reading from the N-terminus, the 498-residue chain is Cystathionine beta-synthase (498 aa).

A disordered region spans residues 1-25; the sequence is MSAPEGPSKCTWTPNTTENTPHTTR. The span at 11–22 shows a compositional bias: low complexity; it reads TWTPNTTENTPH. An N6-(pyridoxal phosphate)lysine modification is found at lysine 73. Residues asparagine 103, 210–214, and serine 302 each bind pyridoxal 5'-phosphate; that span reads GTGGT. 2 CBS domains span residues 374–430 and 435–497; these read TLPK…KKAV and VSKV…SQQK.

Belongs to the cysteine synthase/cystathionine beta-synthase family. The cofactor is pyridoxal 5'-phosphate.

It carries out the reaction L-homocysteine + L-serine = L,L-cystathionine + H2O. It functions in the pathway amino-acid biosynthesis; L-cysteine biosynthesis; L-cysteine from L-homocysteine and L-serine: step 1/2. This is Cystathionine beta-synthase (cysB) from Dictyostelium discoideum (Social amoeba).